Reading from the N-terminus, the 132-residue chain is Large ribosomal subunit protein uL14 (132 aa).

It belongs to the universal ribosomal protein uL14 family. In terms of assembly, part of the 50S ribosomal subunit. Forms a cluster with proteins L3 and L24e, part of which may contact the 16S rRNA in 2 intersubunit bridges.

Its function is as follows. Binds to 23S rRNA. Forms part of two intersubunit bridges in the 70S ribosome. The polypeptide is Large ribosomal subunit protein uL14 (Methanosphaera stadtmanae (strain ATCC 43021 / DSM 3091 / JCM 11832 / MCB-3)).